Here is an 89-residue protein sequence, read N- to C-terminus: MSLSVEAKAKIVSEFGRGENDSGSTEVQVALLTAQINHLQGHFAEHKKDHHSRRGLLRMVSQRRKLLDYLKRKDVARYAALIERLGLRR.

The protein belongs to the universal ribosomal protein uS15 family. In terms of assembly, part of the 30S ribosomal subunit. Forms a bridge to the 50S subunit in the 70S ribosome, contacting the 23S rRNA.

One of the primary rRNA binding proteins, it binds directly to 16S rRNA where it helps nucleate assembly of the platform of the 30S subunit by binding and bridging several RNA helices of the 16S rRNA. In terms of biological role, forms an intersubunit bridge (bridge B4) with the 23S rRNA of the 50S subunit in the ribosome. This chain is Small ribosomal subunit protein uS15, found in Klebsiella pneumoniae (strain 342).